A 424-amino-acid polypeptide reads, in one-letter code: MVSQLAVKGGEALRTRPWPAWPQPAPGVPDAVADVLGSGRWSISGPYRGTESYERRFARAFAAYNGVPHCVPAASGTASLMLALEACGIGAGDEVIVPGLSWVASGSTILGVNAVPIFCDVDPDTLCLSPEAVEAAITEHTRAIVVVHLYSALADMDALSAIAERHGLPLIEDCAQAHGATYRGVKVGALATAGTFSMQHSKVLTSGEGGAVITRDEDFARRVEHLRADGRCLSAVPPAPGAMELVETGELMGNNRCLSEFQAAILAEQLTILDEQNETRRANAAHLDGLLGELGLRPQTTSDGTTSRTYYTYAVRLPDGVLEDVPVTDVSCALTAELGFPVLPSYAPIPANRLYTPHTRRRYTLGLDHERRIDPKRFALPVCEDAARRTVTLHHAALLGDADDMGDIAAAFAKVLRHGAGLMH.

Residue Lys-202 is modified to N6-(pyridoxal phosphate)lysine.

This sequence belongs to the DegT/DnrJ/EryC1 family. L-glutamine:2-deoxy-scyllo-inosose/scyllo-inosose aminotransferase subfamily. Pyridoxal 5'-phosphate serves as cofactor.

The enzyme catalyses 2-deoxy-L-scyllo-inosose + L-glutamine = 2-deoxy-scyllo-inosamine + 2-oxoglutaramate. The catalysed reaction is 3-amino-2,3-dideoxy-scyllo-inosose + L-glutamine = 2-deoxystreptamine + 2-oxoglutaramate. Its pathway is metabolic intermediate biosynthesis; 2-deoxystreptamine biosynthesis; 2-deoxystreptamine from D-glucose 6-phosphate: step 2/4. The protein operates within metabolic intermediate biosynthesis; 2-deoxystreptamine biosynthesis; 2-deoxystreptamine from D-glucose 6-phosphate: step 4/4. It functions in the pathway antibiotic biosynthesis; ribostamycin biosynthesis. Functionally, catalyzes the PLP-dependent transamination of 2-deoxy-scyllo-inosose (2-DOI) to form 2-deoxy-scyllo-inosamine (2-DOIA) using L-glutamine as the amino donor. Also catalyzes the transamination of 3-amino-2,3-dideoxy-scyllo-inosose (keto-2-DOIA) into 2-deoxystreptamine (2-DOS). This is L-glutamine:2-deoxy-scyllo-inosose aminotransferase (rbmB) from Streptomyces ribosidificus.